The primary structure comprises 308 residues: Formamidopyrimidine-DNA glycosylase (308 aa).

The active-site Schiff-base intermediate with DNA is the proline 2. Glutamate 3 acts as the Proton donor in catalysis. Lysine 61 (proton donor; for beta-elimination activity) is an active-site residue. DNA contacts are provided by histidine 100, arginine 120, and arginine 181. The segment at 267–301 (AVYGQEGRPCPRCGALVRRDAFMNRSSFSCPVCQP) adopts an FPG-type zinc-finger fold. Arginine 291 functions as the Proton donor; for delta-elimination activity in the catalytic mechanism.

The protein belongs to the FPG family. Monomer. The cofactor is Zn(2+).

The enzyme catalyses Hydrolysis of DNA containing ring-opened 7-methylguanine residues, releasing 2,6-diamino-4-hydroxy-5-(N-methyl)formamidopyrimidine.. It catalyses the reaction 2'-deoxyribonucleotide-(2'-deoxyribose 5'-phosphate)-2'-deoxyribonucleotide-DNA = a 3'-end 2'-deoxyribonucleotide-(2,3-dehydro-2,3-deoxyribose 5'-phosphate)-DNA + a 5'-end 5'-phospho-2'-deoxyribonucleoside-DNA + H(+). Functionally, involved in base excision repair of DNA damaged by oxidation or by mutagenic agents. Acts as a DNA glycosylase that recognizes and removes damaged bases. Has a preference for oxidized purines, such as 7,8-dihydro-8-oxoguanine (8-oxoG). Has AP (apurinic/apyrimidinic) lyase activity and introduces nicks in the DNA strand. Cleaves the DNA backbone by beta-delta elimination to generate a single-strand break at the site of the removed base with both 3'- and 5'-phosphates. The chain is Formamidopyrimidine-DNA glycosylase from Kineococcus radiotolerans (strain ATCC BAA-149 / DSM 14245 / SRS30216).